A 389-amino-acid chain; its full sequence is Chalcone synthase 4 (389 aa).

The active site involves C164.

Belongs to the thiolase-like superfamily. Chalcone/stilbene synthases family.

The enzyme catalyses (E)-4-coumaroyl-CoA + 3 malonyl-CoA + 3 H(+) = 2',4,4',6'-tetrahydroxychalcone + 3 CO2 + 4 CoA. It functions in the pathway secondary metabolite biosynthesis; flavonoid biosynthesis. In terms of biological role, the primary product of this enzyme is 4,2',4',6'-tetrahydroxychalcone (also termed naringenin-chalcone or chalcone) which can under specific conditions spontaneously isomerize into naringenin. The chain is Chalcone synthase 4 (CHS4) from Medicago sativa (Alfalfa).